Here is a 222-residue protein sequence, read N- to C-terminus: MAASVRQARSLLGVAATLAPGSRGYRARPPPRRRPGPRWPDPEDLLTPRWQLGPRYAAKQFARYGAASGVVPGSLWPSPEQLRELEAEEREWYPSLATMQESLRVKQLAEEQKRREREQHIAECMAKMPQMIVNWQQQQRENWEKAQADKERRARLQAEAQELLGYQVDPRSARFQELLQDLEKKERKRLKEEKQKRKKEARAAALAAAVAQDPAASGAPSS.

Disordered regions lie at residues 19-46 (APGS…EDLL) and 188-222 (KRLK…APSS). Over residues 25-36 (YRARPPPRRRPG) the composition is skewed to basic residues. Positions 99-212 (MQESLRVKQL…AAALAAAVAQ (114 aa)) form a coiled coil. The Nuclear localization signal signature appears at 184 to 200 (KKERKRLKEEKQKRKKE). The span at 203 to 212 (AAALAAAVAQ) shows a compositional bias: low complexity.

Belongs to the mitochondrion-specific ribosomal protein mL64 family. Component of the mitochondrial large ribosomal subunit (mt-LSU). Mature mammalian 55S mitochondrial ribosomes consist of a small (28S) and a large (39S) subunit. The 28S small subunit contains a 12S ribosomal RNA (12S mt-rRNA) and 30 different proteins. The 39S large subunit contains a 16S rRNA (16S mt-rRNA), a copy of mitochondrial valine transfer RNA (mt-tRNA(Val)), which plays an integral structural role, and 52 different proteins. Interacts with GADD45A, GADD45B and GADD45G. Interacts with NR4A1 via the NR4A1 AB domain. Interacts with ATAD3A and ATAD3B. As to quaternary structure, (Microbial infection) Interacts with the human papilloma virus type 16 (HPV 16) minor capsid protein L2. In terms of tissue distribution, widely expressed. Highly expressed in the thyroid gland, heart, lymph nodes, trachea and adrenal tissues. Expressed at lower level in liver skeletal muscle, kidney, pancreas, testis, ovary and stomach. Barely detectable in adrenal adenoma and papillary thyroid cancer.

Its subcellular location is the mitochondrion. It localises to the nucleus. Its function is as follows. Acts as a negative regulator of G1 to S cell cycle phase progression by inhibiting cyclin-dependent kinases. Inhibitory effects are additive with GADD45 proteins but also occur in the absence of GADD45 proteins. Acts as a repressor of the orphan nuclear receptor NR4A1 by inhibiting AB domain-mediated transcriptional activity. May be involved in the hormone-mediated regulation of NR4A1 transcriptional activity. May play a role in mitochondrial protein synthesis. The chain is Large ribosomal subunit protein mL64 (GADD45GIP1) from Homo sapiens (Human).